A 65-amino-acid polypeptide reads, in one-letter code: Large ribosomal subunit protein bL35 (65 aa).

Positions 28 to 53 are disordered; sequence NGSHNLEKKNRKRTRRLHQSTMLDNA. The segment covering 36 to 45 has biased composition (basic residues); the sequence is KNRKRTRRLH.

The protein belongs to the bacterial ribosomal protein bL35 family.

In Chlorobium luteolum (strain DSM 273 / BCRC 81028 / 2530) (Pelodictyon luteolum), this protein is Large ribosomal subunit protein bL35.